The sequence spans 827 residues: Protein Jade-1 (827 aa).

The disordered stretch occupies residues 1 to 35; that stretch reads MKRVCLPSSSEDSDDNGSLSTSWSQHSRSLPSFRH. Positions 16–30 are enriched in polar residues; it reads NGSLSTSWSQHSRSL. The segment at 200–250 adopts a PHD-type 1 zinc-finger fold; the sequence is DVVCDVCQSPDGEDGNEMVFCDKCNICVHQACYGILKVPEGSWLCRTCALG. A C2HC pre-PHD-type zinc finger spans residues 252 to 286; that stretch reads QPKCLLCPKKGGAMKPTRSGTKWVHVSCALWIPEV. Residues 310–366 form a PHD-type 2 zinc finger; the sequence is LLCSLCNEKVGACIQCSIKNCRTAFHVTCAFDHGLEMKTILTQEDEVKFKSYCPKHG. 2 disordered regions span residues 622–705 and 769–810; these read TVAK…SSSL and RTKE…SSSS. Composition is skewed to basic and acidic residues over residues 646–661 and 669–682; these read SRTQGDTKFDSKEKPL and KHTEPPERPAEKKR. The segment covering 692-705 has biased composition (polar residues); sequence ATASSNKKQCSSSL.

It belongs to the JADE family. As to quaternary structure, component of the HBO1 complex composed.

It localises to the nucleus. Its subcellular location is the chromosome. It is found in the cytoplasm. The protein resides in the cytoskeleton. The protein localises to the cilium basal body. Its function is as follows. Scaffold subunit of some HBO1 complexes, which have a histone H4 acetyltransferase activity. Plays a key role in HBO1 complex by directing KAT7/HBO1 specificity towards histone H4 acetylation (H4K5ac, H4K8ac and H4K12ac), regulating DNA replication initiation, regulating DNA replication initiation. The chain is Protein Jade-1 (jade1) from Xenopus laevis (African clawed frog).